The sequence spans 577 residues: Laccase-17 (577 aa).

The signal sequence occupies residues 1-22 (MALQLLLAVFSCVLLLPQPAFG). 2 Plastocyanin-like domains span residues 30–146 (EIKM…PKRG) and 156–309 (KEVP…YEPP). Asparagine 35 and asparagine 76 each carry an N-linked (GlcNAc...) asparagine glycan. Residues histidine 80 and histidine 82 each coordinate Cu cation. N-linked (GlcNAc...) asparagine glycosylation occurs at asparagine 112. Cu cation-binding residues include histidine 125 and histidine 127. 12 N-linked (GlcNAc...) asparagine glycosylation sites follow: asparagine 185, asparagine 201, asparagine 237, asparagine 297, asparagine 335, asparagine 383, asparagine 391, asparagine 401, asparagine 437, asparagine 444, asparagine 450, and asparagine 460. The region spanning 427–561 (KFPWSPIVPF…RMAWLVLDGD (135 aa)) is the Plastocyanin-like 3 domain. Cu cation is bound by residues histidine 478, histidine 481, histidine 483, histidine 540, cysteine 541, histidine 542, and histidine 546.

Belongs to the multicopper oxidase family. Requires Cu cation as cofactor. As to expression, ubiquitous with higher levels in the inflorescence stem.

It localises to the secreted. Its subcellular location is the extracellular space. The protein localises to the apoplast. The catalysed reaction is 4 hydroquinone + O2 = 4 benzosemiquinone + 2 H2O. Lignin degradation and detoxification of lignin-derived products. This chain is Laccase-17 (LAC17), found in Arabidopsis thaliana (Mouse-ear cress).